Consider the following 463-residue polypeptide: Asparagine--tRNA ligase (463 aa).

It belongs to the class-II aminoacyl-tRNA synthetase family. In terms of assembly, homodimer.

It localises to the cytoplasm. The enzyme catalyses tRNA(Asn) + L-asparagine + ATP = L-asparaginyl-tRNA(Asn) + AMP + diphosphate + H(+). In Clostridium kluyveri (strain ATCC 8527 / DSM 555 / NBRC 12016 / NCIMB 10680 / K1), this protein is Asparagine--tRNA ligase.